The following is an 853-amino-acid chain: MICAL-like protein 1 (853 aa).

Residues 2-108 enclose the Calponin-homology (CH) domain; sequence AGPRGALLAW…YVSQYYNHFA (107 aa). Disordered stretches follow at residues 118–162 and 224–659; these read PRKG…TPSS and SGRS…FPLI. Polar residues predominate over residues 145-162; it reads ECSSGSLSKQGSHRTPSS. Positions 162 to 224 constitute an LIM zinc-binding domain; the sequence is STCAACQQHV…AEHCARLGPS (63 aa). S292 and S306 each carry phosphoserine. Residues T312 and T315 each carry the phosphothreonine modification. Over residues 355 to 366 the composition is skewed to basic and acidic residues; the sequence is LSERTPAPRKDP. Residues 381 to 394 show a composition bias toward pro residues; that stretch reads APLPPSSSPGPPPG. S388 is modified (phosphoserine). The NPF1 signature appears at 419–421; sequence NPF. Pro residues predominate over residues 429 to 445; the sequence is PAAPSPAPGPAPTPPES. Phosphothreonine is present on residues T457 and T459. 4 positions are modified to phosphoserine: S460, S461, S474, and S476. 2 stretches are compositionally biased toward low complexity: residues 495-515 and 541-553; these read PSPA…APSE and SASL…LSSS. Phosphoserine is present on residues S568 and S611. Over residues 607–618 the composition is skewed to polar residues; that stretch reads PGTSSPQLQVKS. Residues 623–625 carry the NPF2 motif; it reads NPF. The mediates the interaction with RAB13 and RAB35 and intramolecular interaction with the CH domain stretch occupies residues 642-853; the sequence is KGSKPARPPA…TKSKCPGDRS (212 aa). The 148-residue stretch at 661 to 808 folds into the bMERB domain; it reads RKVQSDQYIP…EEEEDKMLEA (148 aa). A coiled-coil region spans residues 671–701; that stretch reads EEDIHGEIDTIERQLDALEHRGVLLEEKLRG. Residues 690-853 form a necessary and sufficient to associate with tubular recycling endosome membranes, mediate phosphatidic acid-binding and membrane tubulation region; it reads HRGVLLEEKL…TKSKCPGDRS (164 aa). Residue S730 is modified to Phosphoserine. Residues 791–820 are a coiled coil; that stretch reads CLDEDRQREEEEDKMLEAMIKKKEFQKETE.

As to quaternary structure, homooligomer. Interacts (via NPF1 motif) with EHD1 (via EH domain); the interaction is direct and probably recruits EHD1 to membranes. Interacts with EHD3 (via EH domain). Interacts with RAB35 (GTP-bound form); the interaction is direct and probably recruits MICALL1 to membranes. Interacts with ACAP2; the interaction is indirect through RAB35. Interacts with RAB8A (GTP-bound form); regulates RAB8A association with recycling endosomes. Interacts with RAB13 (GTP-bound form). Interacts with ARF6 (GTP-bound form). Interacts with PACSIN2 (via the SH3 domain). Interacts with DPYSL2.

It localises to the recycling endosome membrane. The protein resides in the late endosome membrane. Its subcellular location is the cell projection. It is found in the cilium membrane. The protein localises to the cytoplasm. It localises to the cytoskeleton. The protein resides in the microtubule organizing center. Its subcellular location is the centrosome. It is found in the centriole. Its function is as follows. Lipid-binding protein with higher affinity for phosphatidic acid, a lipid enriched in recycling endosome membranes. On endosome membranes, acts as a downstream effector of Rab proteins recruiting cytosolic proteins to regulate membrane tubulation. Involved in a late step of receptor-mediated endocytosis regulating for instance endocytosed-EGF receptor trafficking. Alternatively, regulates slow endocytic recycling of endocytosed proteins back to the plasma membrane. Also involved in cargo protein delivery to the plasma membrane. Plays a role in ciliogenesis coordination, recruits EHD1 to primary cilium where it is anchored to the centriole through interaction with tubulins. May indirectly play a role in neurite outgrowth. The polypeptide is MICAL-like protein 1 (MICALL1) (Bos taurus (Bovine)).